The primary structure comprises 313 residues: MRPLAVVGPTGTGKSDLALGIAEALSGEIAVEVVNADAMQLYRGMDIGTAKLTVDERRGVPHHQLDVLEVTETATVARYQQAAAADVDAIAARGALPVIVGGSMLYVQSLLDEWSFPATDPQVRARWETRLAEVGVAALHRELAAVDAAAAASILPTDGRRIVRALEVVELTGRPFAASAPTIGAPRWNTAIVGLDWETTVLDERLRRRTDTMFERGLVEEVRGLIGRGLRDGVTAARALGYAQVLADLDAGGDGEAAREPTFVGTRRYVRRQRSWFRRDHRITWLDGAAPGNVDAVLRLWRQRRAGAPRPAD.

ATP is bound at residue 8 to 15 (GPTGTGKS). Position 10-15 (10-15 (TGTGKS)) interacts with substrate.

This sequence belongs to the IPP transferase family. As to quaternary structure, monomer. Mg(2+) serves as cofactor.

The catalysed reaction is adenosine(37) in tRNA + dimethylallyl diphosphate = N(6)-dimethylallyladenosine(37) in tRNA + diphosphate. Its function is as follows. Catalyzes the transfer of a dimethylallyl group onto the adenine at position 37 in tRNAs that read codons beginning with uridine, leading to the formation of N6-(dimethylallyl)adenosine (i(6)A). In Mycolicibacterium gilvum (strain PYR-GCK) (Mycobacterium gilvum (strain PYR-GCK)), this protein is tRNA dimethylallyltransferase.